A 54-amino-acid polypeptide reads, in one-letter code: Ovomucoid (54 aa).

The region spanning 4-54 is the Kazal-like domain; that stretch reads VDCSDYPKPACTVEYMPLCGSDNKTYDNKCNFCNAVVDSNGTLTLSHFGKC. 3 disulfide bridges follow: Cys-6-Cys-36, Cys-14-Cys-33, and Cys-22-Cys-54. Asn-43 carries N-linked (GlcNAc...) asparagine glycosylation.

The protein resides in the secreted. In Anser anser anser (Western greylag goose), this protein is Ovomucoid.